Here is a 444-residue protein sequence, read N- to C-terminus: Phosphoglucosamine mutase (444 aa).

Residue serine 104 is the Phosphoserine intermediate of the active site. Mg(2+) is bound by residues serine 104, aspartate 243, aspartate 245, and aspartate 247. Serine 104 bears the Phosphoserine mark.

This sequence belongs to the phosphohexose mutase family. It depends on Mg(2+) as a cofactor. In terms of processing, activated by phosphorylation.

The catalysed reaction is alpha-D-glucosamine 1-phosphate = D-glucosamine 6-phosphate. In terms of biological role, catalyzes the conversion of glucosamine-6-phosphate to glucosamine-1-phosphate. The sequence is that of Phosphoglucosamine mutase from Neisseria gonorrhoeae (strain ATCC 700825 / FA 1090).